The following is a 398-amino-acid chain: Succinate--CoA ligase [ADP-forming] subunit beta (398 aa).

An ATP-grasp domain is found at 9-254 (KAVLREFGVS…ETEEDAKEIE (246 aa)). ATP is bound by residues Lys46, 53–55 (GRG), Glu109, Ala112, and Glu117. Asn209 and Asp223 together coordinate Mg(2+). Residues Asn274 and 331–333 (GIM) contribute to the substrate site.

Belongs to the succinate/malate CoA ligase beta subunit family. Heterotetramer of two alpha and two beta subunits. The cofactor is Mg(2+).

It carries out the reaction succinate + ATP + CoA = succinyl-CoA + ADP + phosphate. The enzyme catalyses GTP + succinate + CoA = succinyl-CoA + GDP + phosphate. It functions in the pathway carbohydrate metabolism; tricarboxylic acid cycle; succinate from succinyl-CoA (ligase route): step 1/1. Functionally, succinyl-CoA synthetase functions in the citric acid cycle (TCA), coupling the hydrolysis of succinyl-CoA to the synthesis of either ATP or GTP and thus represents the only step of substrate-level phosphorylation in the TCA. The beta subunit provides nucleotide specificity of the enzyme and binds the substrate succinate, while the binding sites for coenzyme A and phosphate are found in the alpha subunit. This chain is Succinate--CoA ligase [ADP-forming] subunit beta, found in Afipia carboxidovorans (strain ATCC 49405 / DSM 1227 / KCTC 32145 / OM5) (Oligotropha carboxidovorans).